A 455-amino-acid polypeptide reads, in one-letter code: Regulatory protein LuxO (455 aa).

The Response regulatory domain maps to methionine 1–isoleucine 112. 4-aspartylphosphate is present on aspartate 47. One can recognise a Sigma-54 factor interaction domain in the interval phenylalanine 132–valine 361. ATP contacts are provided by residues glycine 160 to glutamate 167 and alanine 223 to glutamate 232.

Involved in the regulation of different processes depending on the cell density. Acts together with sigma-54 to repress, perhaps indirectly, some genes. In Vibrio cholerae serotype O1 (strain ATCC 39315 / El Tor Inaba N16961), this protein is Regulatory protein LuxO (luxO).